The following is a 421-amino-acid chain: Testin (421 aa).

One can recognise a PET domain in the interval 92-199 (MILTNPVPAK…GDVKLPSEMD (108 aa)). The segment at 135-165 (QPVAGSEGAQYRKKQLAKQLPEHDQDPSKCH) is disordered. The span at 154 to 165 (LPEHDQDPSKCH) shows a compositional bias: basic and acidic residues. LIM zinc-binding domains are found at residues 234–297 (YSCY…CDSE), 299–359 (PRCA…NHAV), and 362–421 (QGCH…KMMS).

It belongs to the prickle / espinas / testin family. In terms of assembly, interacts via LIM domain 1 with ZYX. Interacts (via LIM domain 3) with ENAH and VASP. Interacts with ALKBH4, talin, actin, alpha-actinin, GRIP1 and PXN. Interacts (via LIM domain 2) with ACTL7A (via N-terminus). Heterodimer with ACTL7A; the heterodimer interacts with ENAH to form a heterotrimer.

It is found in the cytoplasm. Its subcellular location is the cell junction. The protein localises to the focal adhesion. In terms of biological role, scaffold protein that may play a role in cell adhesion, cell spreading and in the reorganization of the actin cytoskeleton. Plays a role in the regulation of cell proliferation. May act as a tumor suppressor. This Dasypus novemcinctus (Nine-banded armadillo) protein is Testin (TES).